The following is a 360-amino-acid chain: NADH-quinone oxidoreductase subunit H (360 aa).

8 consecutive transmembrane segments (helical) span residues 20-40, 95-115, 130-150, 176-196, 206-226, 261-281, 297-317, and 336-356; these read GMVWPVLWILLKIVALLIPLM, GLFVLGPVMAIMPALAAWVVI, LLLVMAITSIEVYGVIIAGWA, FCLLIVIMVSGSMNLTEIVLA, GIGFLSWNWLPLLPVFLVYLI, IFFLAEYASMWLVSILAALMF, IPGWIWLGIKTCLVVSMFIWI, and IFIPVTLACLLIAGGWLLSPW.

Belongs to the complex I subunit 1 family. In terms of assembly, NDH-1 is composed of 14 different subunits. Subunits NuoA, H, J, K, L, M, N constitute the membrane sector of the complex.

It is found in the cell inner membrane. It catalyses the reaction a quinone + NADH + 5 H(+)(in) = a quinol + NAD(+) + 4 H(+)(out). Its function is as follows. NDH-1 shuttles electrons from NADH, via FMN and iron-sulfur (Fe-S) centers, to quinones in the respiratory chain. The immediate electron acceptor for the enzyme in this species is believed to be ubiquinone. Couples the redox reaction to proton translocation (for every two electrons transferred, four hydrogen ions are translocated across the cytoplasmic membrane), and thus conserves the redox energy in a proton gradient. This subunit may bind ubiquinone. The sequence is that of NADH-quinone oxidoreductase subunit H from Verminephrobacter eiseniae (strain EF01-2).